The sequence spans 122 residues: Acidic phospholipase A2 1 (122 aa).

7 disulfides stabilise this stretch: Cys26–Cys115, Cys28–Cys44, Cys43–Cys94, Cys49–Cys122, Cys50–Cys87, Cys57–Cys81, and Cys75–Cys85. Residues Tyr27, Gly29, and Gly31 each coordinate Ca(2+). The active site involves His47. Asp48 contacts Ca(2+). Asp88 is a catalytic residue.

The protein belongs to the phospholipase A2 family. Group II subfamily. D49 sub-subfamily. In terms of assembly, homodimer. The cofactor is Ca(2+). As to expression, expressed by the venom gland.

The protein resides in the secreted. It carries out the reaction a 1,2-diacyl-sn-glycero-3-phosphocholine + H2O = a 1-acyl-sn-glycero-3-phosphocholine + a fatty acid + H(+). PLA2 catalyzes the calcium-dependent hydrolysis of the 2-acyl groups in 3-sn-phosphoglycerides. The polypeptide is Acidic phospholipase A2 1 (Protobothrops mucrosquamatus (Taiwan habu)).